We begin with the raw amino-acid sequence, 157 residues long: Homeobox protein DBX2 (157 aa).

The homeobox DNA-binding region spans 9-68 (GILRRAVFSEDQRKALEKMFQKQKYISKTDRKKLAINLGLKESQVKIWFQNRRMKWRNSK). Residues 105–157 (SQEQTSPRWKEKSPGNSERLTSTQPPPRANSSQSPLYLYPDHDTANKAVTSSD) are disordered. The span at 118–139 (PGNSERLTSTQPPPRANSSQSP) shows a compositional bias: polar residues.

This sequence belongs to the H2.0 homeobox family. In terms of tissue distribution, localized to the central nervous system during embryogenesis. It is found restricted to the rostro-caudal and dorso-ventral regions of the hindbrain. In the ventricular zone of the spinal cord, it localizes to the dorsal part of the basal plate. In the adult, it is detected in ovary.

The protein resides in the nucleus. In terms of biological role, appears to perform a very early function in establishing the identity of a subset of cells that originate in the region of the ventricular zone in the developing spinal cord and in the hindbrain. In Gallus gallus (Chicken), this protein is Homeobox protein DBX2 (DBX2).